A 242-amino-acid chain; its full sequence is MATNGENGRHQEVGHKSLLQSDALYQYILETSVYPREPEPMKELREITAKHPWNLMTTSADEGQFLSMLLKLINAKNTMEIGVFTGYSLLATAMALPDDGKILAMDINRENYEIGLPIIEKAGLAHKIVFREGPALPVLDQMIEDGKYHGSYDFIFVDADKDNYLNYHKRLIDLVKVGGLIGYDNTLWNGSVVAPPDAPLRKYVRYYRDFVLELNKALAADSRIEICQLPVGDGITLCRRIS.

A substrate-binding site is contributed by Lys-16. Residues Thr-58, Glu-80, 82–83, Ser-88, Asp-106, and Ala-135 contribute to the S-adenosyl-L-methionine site; that span reads GV. Asp-158 contributes to the substrate binding site. Asp-158 lines the a divalent metal cation pocket. Asp-160 lines the S-adenosyl-L-methionine pocket. A divalent metal cation contacts are provided by Asp-184 and Asn-185. Asn-189 serves as a coordination point for substrate.

It belongs to the class I-like SAM-binding methyltransferase superfamily. Cation-dependent O-methyltransferase family. CCoAMT subfamily. Mg(2+) serves as cofactor. In terms of tissue distribution, mostly expressed in the bottom and middle parts of the stems.

The catalysed reaction is (E)-caffeoyl-CoA + S-adenosyl-L-methionine = (E)-feruloyl-CoA + S-adenosyl-L-homocysteine + H(+). The protein operates within aromatic compound metabolism; phenylpropanoid biosynthesis. In terms of biological role, methylates caffeoyl-CoA to feruloyl-CoA and 5-hydroxyferuloyl-CoA to sinapoyl-CoA. Plays a role in the synthesis of feruloylated polysaccharides. Involved in the reinforcement of the plant cell wall. Also involved in the responding to wounding or pathogen challenge by the increased formation of cell wall-bound ferulic acid polymers. Methylates 5-hydroxyferulolyl-CoA more efficiently than caffeoyl-CoA. The polypeptide is Caffeoyl-CoA O-methyltransferase 2 (CCOAOMT2) (Nicotiana tabacum (Common tobacco)).